The sequence spans 485 residues: Telomeric DNA-binding factor trf1 (485 aa).

A compositionally biased stretch (basic and acidic residues) spans 1–20; that stretch reads MSKRSLDPSDDFKGQKRLAI. Residues 1–23 form a disordered region; sequence MSKRSLDPSDDFKGQKRLAIDPE. Positions 400–457 constitute an HTH myb-type domain; it reads RRVANRRSWTKEEEEALLDGLDLVKGPRWSQILELYGPGGKKSEVLKYRNQVQLKDKA. Positions 428 to 453 form a DNA-binding region, H-T-H motif; that stretch reads WSQILELYGPGGKKSEVLKYRNQVQL.

As to quaternary structure, homodimer.

Its subcellular location is the nucleus. In terms of biological role, binds the telomeric double-stranded TTACAGG repeat and regulates telomere length. The protein is Telomeric DNA-binding factor trf1 (trf1) of Schizosaccharomyces pombe (strain 972 / ATCC 24843) (Fission yeast).